The primary structure comprises 96 residues: Cathelin (96 aa).

A Pyrrolidone carboxylic acid modification is found at glutamine 1. The interval 31-50 (DQPPKADEDPGTPKPVSFTV) is disordered. Intrachain disulfides connect cysteine 55/cysteine 66 and cysteine 73/cysteine 90.

This sequence belongs to the cathelicidin family.

The protein localises to the secreted. In terms of biological role, probably a microbicidal peptide. This Sus scrofa (Pig) protein is Cathelin.